Consider the following 497-residue polypeptide: Glutamyl-tRNA(Gln) amidotransferase subunit A (497 aa).

Catalysis depends on charge relay system residues Lys-91 and Ser-166. Residues 143-171 (SSTENSAYGPTHNPWDLERTAGGSGGGSS) are disordered. Ser-190 functions as the Acyl-ester intermediate in the catalytic mechanism.

Belongs to the amidase family. GatA subfamily. Heterotrimer of A, B and C subunits.

It catalyses the reaction L-glutamyl-tRNA(Gln) + L-glutamine + ATP + H2O = L-glutaminyl-tRNA(Gln) + L-glutamate + ADP + phosphate + H(+). In terms of biological role, allows the formation of correctly charged Gln-tRNA(Gln) through the transamidation of misacylated Glu-tRNA(Gln) in organisms which lack glutaminyl-tRNA synthetase. The reaction takes place in the presence of glutamine and ATP through an activated gamma-phospho-Glu-tRNA(Gln). The polypeptide is Glutamyl-tRNA(Gln) amidotransferase subunit A (Corynebacterium glutamicum (strain ATCC 13032 / DSM 20300 / JCM 1318 / BCRC 11384 / CCUG 27702 / LMG 3730 / NBRC 12168 / NCIMB 10025 / NRRL B-2784 / 534)).